Here is a 44-residue protein sequence, read N- to C-terminus: Photosystem I reaction center subunit IX (44 aa).

A helical transmembrane segment spans residues 7 to 27 (YLSVAPVLTTLWFGSLAGLLI).

Belongs to the PsaJ family.

Its subcellular location is the plastid. It is found in the chloroplast thylakoid membrane. In terms of biological role, may help in the organization of the PsaE and PsaF subunits. The polypeptide is Photosystem I reaction center subunit IX (Liriodendron tulipifera (Tuliptree)).